Consider the following 242-residue polypeptide: Biosynthetic peptidoglycan transglycosylase (242 aa).

Residues 21-41 (VALVVFWGGGIALFSVVPVPF) traverse the membrane as a helical segment.

The protein belongs to the glycosyltransferase 51 family.

The protein resides in the cell inner membrane. The enzyme catalyses [GlcNAc-(1-&gt;4)-Mur2Ac(oyl-L-Ala-gamma-D-Glu-L-Lys-D-Ala-D-Ala)](n)-di-trans,octa-cis-undecaprenyl diphosphate + beta-D-GlcNAc-(1-&gt;4)-Mur2Ac(oyl-L-Ala-gamma-D-Glu-L-Lys-D-Ala-D-Ala)-di-trans,octa-cis-undecaprenyl diphosphate = [GlcNAc-(1-&gt;4)-Mur2Ac(oyl-L-Ala-gamma-D-Glu-L-Lys-D-Ala-D-Ala)](n+1)-di-trans,octa-cis-undecaprenyl diphosphate + di-trans,octa-cis-undecaprenyl diphosphate + H(+). It participates in cell wall biogenesis; peptidoglycan biosynthesis. Its function is as follows. Peptidoglycan polymerase that catalyzes glycan chain elongation from lipid-linked precursors. This Salmonella arizonae (strain ATCC BAA-731 / CDC346-86 / RSK2980) protein is Biosynthetic peptidoglycan transglycosylase.